Reading from the N-terminus, the 200-residue chain is Octanoyltransferase (200 aa).

One can recognise a BPL/LPL catalytic domain in the interval 27–200; the sequence is GAEDDQLWLV…WAELFSARWR (174 aa). Residues 66–73, 134–136, and 147–149 each bind substrate; these read RGGQITYH, SLG, and GIA. The Acyl-thioester intermediate role is filled by Cys-165.

Belongs to the LipB family.

It is found in the cytoplasm. The catalysed reaction is octanoyl-[ACP] + L-lysyl-[protein] = N(6)-octanoyl-L-lysyl-[protein] + holo-[ACP] + H(+). The protein operates within protein modification; protein lipoylation via endogenous pathway; protein N(6)-(lipoyl)lysine from octanoyl-[acyl-carrier-protein]: step 1/2. Catalyzes the transfer of endogenously produced octanoic acid from octanoyl-acyl-carrier-protein onto the lipoyl domains of lipoate-dependent enzymes. Lipoyl-ACP can also act as a substrate although octanoyl-ACP is likely to be the physiological substrate. The sequence is that of Octanoyltransferase from Dichelobacter nodosus (strain VCS1703A).